A 422-amino-acid polypeptide reads, in one-letter code: Glycerol-3-phosphate dehydrogenase [NAD(+)] 2 (422 aa).

NAD(+)-binding positions include Gly-69–Gly-74, Phe-157, Lys-180, and Ala-213. A substrate-binding site is contributed by Lys-180. Lys-273 acts as the Proton acceptor in catalysis. Arg-338 and Gln-367 together coordinate NAD(+). Arg-338 to Asn-339 contributes to the substrate binding site.

The protein belongs to the NAD-dependent glycerol-3-phosphate dehydrogenase family.

It catalyses the reaction sn-glycerol 3-phosphate + NAD(+) = dihydroxyacetone phosphate + NADH + H(+). In Candida glabrata (strain ATCC 2001 / BCRC 20586 / JCM 3761 / NBRC 0622 / NRRL Y-65 / CBS 138) (Yeast), this protein is Glycerol-3-phosphate dehydrogenase [NAD(+)] 2 (GPD2).